Reading from the N-terminus, the 305-residue chain is Axin interactor, dorsalization-associated protein A (305 aa).

Positions 153 to 220 (GTLLPRLPSE…RKEDTYVHFN (68 aa)) are axin-binding. One can recognise a C2 Aida-type domain in the interval 156–303 (LPRLPSEPGM…LYLHLLQTLL (148 aa)).

The protein belongs to the AIDA family.

Acts as a ventralizing factor during embryogenesis. Inhibits axin-mediated JNK activation by binding axin and disrupting axin homodimerization. This in turn antagonizes a Wnt/beta-catenin-independent dorsalization pathway activated by axin/JNK-signaling. This is Axin interactor, dorsalization-associated protein A (aida-a) from Xenopus laevis (African clawed frog).